Reading from the N-terminus, the 378-residue chain is Probable serine/threonine-protein kinase PBL7 (378 aa).

Positions 1 to 49 are disordered; sequence MGWIPCSGKSSGRNKTRRNGDHKLDRKSSDCSVSTSEKSRAKSSLSESK. A lipid anchor (N-myristoyl glycine) is attached at glycine 2. The segment covering 18–29 has biased composition (basic and acidic residues); sequence RNGDHKLDRKSS. Positions 32–47 are enriched in low complexity; sequence SVSTSEKSRAKSSLSE. Threonine 62 is modified (phosphothreonine). Positions 73–350 constitute a Protein kinase domain; the sequence is FRKECLIGEG…ADVVTALSYL (278 aa). Residues 79–87 and lysine 102 each bind ATP; that span reads IGEGGFGRV. Tyrosine 147 is modified (phosphotyrosine). Aspartate 200 acts as the Proton acceptor in catalysis. Phosphoserine occurs at positions 204 and 234. Threonine 235 and threonine 240 each carry phosphothreonine. Tyrosine 248 carries the phosphotyrosine modification.

The protein belongs to the protein kinase superfamily. Ser/Thr protein kinase family. As to quaternary structure, interacts with BSU1 and BSL1. Phosphorylated at Ser-43, Ser-46 and Ser-234. As to expression, widely expressed.

The protein resides in the cell membrane. It catalyses the reaction L-seryl-[protein] + ATP = O-phospho-L-seryl-[protein] + ADP + H(+). The enzyme catalyses L-threonyl-[protein] + ATP = O-phospho-L-threonyl-[protein] + ADP + H(+). Functionally, serine/threonine-protein kinase involved in the positive regulation of brassinosteroid (BR) signaling and plant growth. Phosphorylates both BSU1 and BSL1 in vitro. In Arabidopsis thaliana (Mouse-ear cress), this protein is Probable serine/threonine-protein kinase PBL7.